The sequence spans 564 residues: Myb-like protein F (564 aa).

3 disordered regions span residues 22–107 (YNNS…NYNN), 122–203 (NYNN…YNGG), and 310–410 (NYNN…TKKY). Positions 23–79 (NNSNHYNDNNDNNNNNNNNNNDNNNNDNNNNNNNNNNSIINNESDNESNGTSNNYND) are enriched in low complexity. Basic and acidic residues predominate over residues 82-96 (NDNHHHHQDDEHHGN). 4 stretches are compositionally biased toward low complexity: residues 97-107 (GNDNDNENYNN), 135-173 (EINS…NNSK), 193-203 (NNNNNNKYNGG), and 310-364 (NYNN…NSSN). The segment covering 365 to 409 (KEYKEKEYKEKEYKEKEFKESKDSSLKRKSSSDDDGDDSGRDTKK) has biased composition (basic and acidic residues). The SANT domain occupies 412–464 (PGRTVWTLEEEELYKEVFNHYGKNWKKIKTHFPDKSKSQVTSHGQYLIKINKL). Residues 519–556 (NNENTNDNNNHNNNNYNDNNNNSNNNNNFNNSNNNNTN) show a composition bias toward low complexity. Residues 519 to 564 (NNENTNDNNNHNNNNYNDNNNNSNNNNNFNNSNNNNTNKFIDEDDD) are disordered.

It is found in the nucleus. This chain is Myb-like protein F (mybF), found in Dictyostelium discoideum (Social amoeba).